We begin with the raw amino-acid sequence, 618 residues long: Pyranose 2-oxidase (618 aa).

The residue at position 170 (histidine 170) is a Tele-8alpha-FAD histidine. Substrate-binding residues include glutamine 441 and histidine 443. Residue histidine 540 is the Proton acceptor of the active site. Asparagine 583 is a catalytic residue.

Belongs to the GMC oxidoreductase family. Homotetramer. The cofactor is FAD.

It carries out the reaction D-glucose + O2 = 2-dehydro-D-glucose + H2O2. In terms of biological role, catalyzes the oxidation of various aldopyranoses and disaccharides on carbon-2 to the corresponding 2-keto sugars concomitant with the reduction of O(2) to H(2)O(2). This Lyophyllum shimeji (Hon-shimeji) protein is Pyranose 2-oxidase (p2ox).